An 815-amino-acid polypeptide reads, in one-letter code: MFKLTRNKDEQSGSATFAMPLLPLRDIVVFPSMVVPLFVGRDKSVNALDKAMATDKKIFLAAQTKAKTDTPGESDIYRVGTVANILQILRLPDGTVKVLVEGDFRARISSFIPHPDHFFVSLEGLEESEDESVEIEALRRGVRAAFDAYSKHNKKINQEILDAVAAIDNASRLADTIAAYMPFKLDVKQKLLETLGVAKRLEKLFGQIRSEIEILQTEERIKGRVKKQMEKTQREYYLNEQMRAIQKEMGEKDDFKSELEELEKRIKRKKLSQEAAAKVRAEFKKLKLMSPMSAEATVVRNYIDWILSLPWYEKTRDKLDIDESIRILDEDHYGLEKPKERIIEYLAVQALVKRIKGPILCFVGPPGVGKTSLAKSIARAMNRNFIRLSLGGVRDEAEIRGHRRTYIGAMPGKIIQSLKKVKSNNPVFCLDEVDKMSMDFRGDPSAALLEVLDPEQNFSFNDHYLDLDYDLSEVFFITTANNLHSIPPPLRDRMEIIQIAGYTEFDKLNIGRNFLVAKQCKANGLSLDNIAFSDDMLLYIIRHYTKEAGVRNLEREIASICRKVAKEVVRRGPETRIELTEDLVQEYLGIPKFRYGVAEEKDEIGLAVGLAWTEFGGDILGIETVVMPGKGKVQITGKLGDVMQESAQAALSYVRSRAKRLGIDPDFYQNFDIHVHVPEGAIPKDGPSAGITMATSIVSALARIPVRSDLAMTGEITLRGRVLPIGGLKEKILAAHRALLKTVLIPKDNAKDLKDIPAKILEEIQVELVEHMDDVLRKAMVVPEDRELFHEEEAGAQQAVMFEQKPPAADEIRAH.

The Lon N-terminal domain maps to 19–212; it reads MPLLPLRDIV…KLFGQIRSEI (194 aa). 364–371 lines the ATP pocket; that stretch reads GPPGVGKT. The region spanning 601 to 782 is the Lon proteolytic domain; that stretch reads KDEIGLAVGL…DDVLRKAMVV (182 aa). Active-site residues include Ser688 and Lys731. The segment at 793–815 is disordered; it reads EAGAQQAVMFEQKPPAADEIRAH.

This sequence belongs to the peptidase S16 family. Homohexamer. Organized in a ring with a central cavity.

The protein localises to the cytoplasm. The catalysed reaction is Hydrolysis of proteins in presence of ATP.. ATP-dependent serine protease that mediates the selective degradation of mutant and abnormal proteins as well as certain short-lived regulatory proteins. Required for cellular homeostasis and for survival from DNA damage and developmental changes induced by stress. Degrades polypeptides processively to yield small peptide fragments that are 5 to 10 amino acids long. Binds to DNA in a double-stranded, site-specific manner. This chain is Lon protease 1, found in Syntrophobacter fumaroxidans (strain DSM 10017 / MPOB).